An 86-amino-acid chain; its full sequence is Small ribosomal subunit protein bS20 (86 aa).

The protein belongs to the bacterial ribosomal protein bS20 family.

Its function is as follows. Binds directly to 16S ribosomal RNA. The sequence is that of Small ribosomal subunit protein bS20 from Mycolicibacterium vanbaalenii (strain DSM 7251 / JCM 13017 / BCRC 16820 / KCTC 9966 / NRRL B-24157 / PYR-1) (Mycobacterium vanbaalenii).